A 767-amino-acid polypeptide reads, in one-letter code: DNA topoisomerase 1 (767 aa).

Basic and acidic residues predominate over residues 1 to 23 (MSGDHLHNDSQIEADFRLNDSHK). The segment at 1–201 (MSGDHLHNDS…NKKKKPKKEE (201 aa)) is disordered. Residue S2 is modified to N-acetylserine. A phosphoserine mark is found at S2 and S10. Positions 24 to 39 (HKDKHKDREHRHKEHK) are enriched in basic residues. Basic and acidic residues predominate over residues 40-110 (KDKEKDREKS…DAKIKKEKEN (71 aa)). At S59 the chain carries Phosphoserine. K103 is covalently cross-linked (Glycyl lysine isopeptide (Lys-Gly) (interchain with G-Cter in SUMO2)). Residue K105 forms a Glycyl lysine isopeptide (Lys-Gly) (interchain with G-Cter in SUMO); alternate linkage. K105 participates in a covalent cross-link: Glycyl lysine isopeptide (Lys-Gly) (interchain with G-Cter in SUMO2); alternate. At S114 the chain carries Phosphoserine. K119 participates in a covalent cross-link: Glycyl lysine isopeptide (Lys-Gly) (interchain with G-Cter in SUMO); alternate. K119 participates in a covalent cross-link: Glycyl lysine isopeptide (Lys-Gly) (interchain with G-Cter in SUMO2); alternate. K119 is covalently cross-linked (Glycyl lysine isopeptide (Lys-Gly) (interchain with G-Cter in SUMO1); alternate). Over residues 131-168 (PKEDIKPLKRPRDEDDADYKPKKIKTEDIKKEKKRKLE) the composition is skewed to basic and acidic residues. Residues K136 and K150 each participate in a glycyl lysine isopeptide (Lys-Gly) (interchain with G-Cter in SUMO2) cross-link. K155 is covalently cross-linked (Glycyl lysine isopeptide (Lys-Gly) (interchain with G-Cter in SUMO); alternate). A Glycyl lysine isopeptide (Lys-Gly) (interchain with G-Cter in SUMO2); alternate cross-link involves residue K155. Residues K160 and K166 each participate in a glycyl lysine isopeptide (Lys-Gly) (interchain with G-Cter in SUMO2) cross-link. K174 participates in a covalent cross-link: Glycyl lysine isopeptide (Lys-Gly) (interchain with G-Cter in SUMO2); alternate. K174 bears the N6-acetyllysine; alternate mark. Residues 181-201 (KDKDKKGAESDNKKKKPKKEE) are compositionally biased toward basic and acidic residues. Residue K206 forms a Glycyl lysine isopeptide (Lys-Gly) (interchain with G-Cter in SUMO2) linkage. At K282 the chain carries N6-acetyllysine. A Glycyl lysine isopeptide (Lys-Gly) (interchain with G-Cter in SUMO2) cross-link involves residue K338. 2 interaction with DNA regions span residues 427-428 (KY) and 490-495 (RAGNEK). A Topo IB-type catalytic domain is found at 434–767 (SSRIKGEKDW…IDMTDEDYEF (334 aa)). S508 carries the phosphoserine; by CK2 modification. Residue K551 forms a Glycyl lysine isopeptide (Lys-Gly) (interchain with G-Cter in SUMO2) linkage. Residues 587–589 (TAK) form an interaction with DNA region. Residues K644, K702, and K714 each participate in a glycyl lysine isopeptide (Lys-Gly) (interchain with G-Cter in SUMO2) cross-link. Residue Y725 is the O-(3'-phospho-DNA)-tyrosine intermediate of the active site.

This sequence belongs to the type IB topoisomerase family. As to quaternary structure, monomer. Interacts with ERCC6. Interacts with TPRN; TPRN interacts with a number of DNA damage response proteins, is recruited to sites of DNA damage and may play a role in DNA damage repair. In terms of processing, sumoylated. Lys-119 is the main site of sumoylation. Sumoylation plays a role in partitioning TOP1 between nucleoli and nucleoplasm. Levels are dramatically increased on camptothecin (CPT) treatment. Phosphorylation at Ser-508 by CK2 increases binding to supercoiled DNA and sensitivity to camptothecin.

The protein resides in the nucleus. It localises to the nucleolus. Its subcellular location is the nucleoplasm. The enzyme catalyses ATP-independent breakage of single-stranded DNA, followed by passage and rejoining.. Its activity is regulated as follows. Specifically inhibited by camptothecin (CPT), a plant alkaloid with antitumor activity. Releases the supercoiling and torsional tension of DNA introduced during the DNA replication and transcription by transiently cleaving and rejoining one strand of the DNA duplex. Introduces a single-strand break via transesterification at a target site in duplex DNA. The scissile phosphodiester is attacked by the catalytic tyrosine of the enzyme, resulting in the formation of a DNA-(3'-phosphotyrosyl)-enzyme intermediate and the expulsion of a 5'-OH DNA strand. The free DNA strand then rotates around the intact phosphodiester bond on the opposing strand, thus removing DNA supercoils. Finally, in the religation step, the DNA 5'-OH attacks the covalent intermediate to expel the active-site tyrosine and restore the DNA phosphodiester backbone. Regulates the alternative splicing of tissue factor (F3) pre-mRNA in endothelial cells. Involved in the circadian transcription of the core circadian clock component BMAL1 by altering the chromatin structure around the ROR response elements (ROREs) on the BMAL1 promoter. In Cricetulus griseus (Chinese hamster), this protein is DNA topoisomerase 1 (TOP1).